The chain runs to 254 residues: Cytochrome c oxidase subunit 2 (254 aa).

Residues 12–38 (DAPEPWQICYQDSATKIMSGIDKLTGE) lie on the Mitochondrial intermembrane side of the membrane. A helical transmembrane segment spans residues 39 to 59 (IFYYETLLLIIVGWVLISAII). Residues 60–73 (KYTKTELSYKYFNH) are Mitochondrial matrix-facing. Residues 74–94 (GTLIEILWTCSPAFILIAISF) traverse the membrane as a helical segment. The Mitochondrial intermembrane segment spans residues 95–248 (PSFKLLYLMD…KYLEWLNIHL (154 aa)). Residues histidine 182, cysteine 217, glutamate 219, cysteine 221, histidine 225, and methionine 228 each coordinate Cu cation. Mg(2+) is bound at residue glutamate 219.

This sequence belongs to the cytochrome c oxidase subunit 2 family. As to quaternary structure, component of the cytochrome c oxidase (complex IV, CIV), a multisubunit enzyme composed of a catalytic core of 3 subunits and several supernumerary subunits. The complex exists as a monomer or a dimer and forms supercomplexes (SCs) in the inner mitochondrial membrane with ubiquinol-cytochrome c oxidoreductase (cytochrome b-c1 complex, complex III, CIII). Cu cation serves as cofactor.

The protein localises to the mitochondrion inner membrane. It catalyses the reaction 4 Fe(II)-[cytochrome c] + O2 + 8 H(+)(in) = 4 Fe(III)-[cytochrome c] + 2 H2O + 4 H(+)(out). Functionally, component of the cytochrome c oxidase, the last enzyme in the mitochondrial electron transport chain which drives oxidative phosphorylation. The respiratory chain contains 3 multisubunit complexes succinate dehydrogenase (complex II, CII), ubiquinol-cytochrome c oxidoreductase (cytochrome b-c1 complex, complex III, CIII) and cytochrome c oxidase (complex IV, CIV), that cooperate to transfer electrons derived from NADH and succinate to molecular oxygen, creating an electrochemical gradient over the inner membrane that drives transmembrane transport and the ATP synthase. Cytochrome c oxidase is the component of the respiratory chain that catalyzes the reduction of oxygen to water. Electrons originating from reduced cytochrome c in the intermembrane space (IMS) are transferred via the dinuclear copper A center (CU(A)) of subunit 2 and heme A of subunit 1 to the active site in subunit 1, a binuclear center (BNC) formed by heme A3 and copper B (CU(B)). The BNC reduces molecular oxygen to 2 water molecules using 4 electrons from cytochrome c in the IMS and 4 protons from the mitochondrial matrix. This Zancudomyces culisetae (Gut fungus) protein is Cytochrome c oxidase subunit 2.